The chain runs to 532 residues: FRIGIDA-like protein 4b (532 aa).

The protein belongs to the Frigida family. In terms of tissue distribution, expressed in leaves, shoot apex, flowers and during seed development.

The chain is FRIGIDA-like protein 4b (FRL4B) from Arabidopsis thaliana (Mouse-ear cress).